The following is an 80-amino-acid chain: Cytochrome c oxidase subunit 7A1, mitochondrial (80 aa).

The N-terminal 21 residues, 1–21 (MRALRVSQALVRSFSSSTRSH), are a transit peptide targeting the mitochondrion. Residues 22-46 (LENRVAEKQKLFQADNDLPVHLKGG) are Mitochondrial matrix-facing. Residues 47-75 (GMDNVLYRLTMTLTLGGTAYCLYCLGWAS) form a helical membrane-spanning segment. Residues 76–80 (FPHKK) lie on the Mitochondrial intermembrane side of the membrane.

Belongs to the cytochrome c oxidase VIIa family. As to quaternary structure, component of the complex IV (CIV, cytochrome c oxidase), a multisubunit enzyme composed of 14 subunits. The complex is composed of a catalytic core of 3 subunits MT-CO1, MT-CO2 and MT-CO3, encoded in the mitochondrial DNA, and 11 supernumerary subunits COX4I, COX5A, COX5B, COX6A, COX6B, COX6C, COX7A, COX7B, COX7C, COX8 and NDUFA4, which are encoded in the nuclear genome. The complex exists as a monomer or a dimer and forms supercomplexes (SCs) in the inner mitochondrial membrane with NADH-ubiquinone oxidoreductase (complex I, CI) and ubiquinol-cytochrome c oxidoreductase (cytochrome b-c1 complex, complex III, CIII), resulting in different assemblies (supercomplex SCI(1)III(2)IV(1) and megacomplex MCI(2)III(2)IV(2)).

Its subcellular location is the mitochondrion inner membrane. It participates in energy metabolism; oxidative phosphorylation. In terms of biological role, component of the mitochondrial respiratory complex IV (CIV, also named cytochrome c oxidase complex), the last enzyme in the mitochondrial electron transport chain which drives oxidative phosphorylation. The CIV complex is the component of the respiratory chain that catalyzes the reduction of oxygen to water. Acts as an assembly factor that specifically drives the homodimerization of CIV complexes, mediating the formation of mitochondrial respiratory supercomplexes (respirasomes) containing two CIV: supercomplxes with two molecules of CIV show improved activity. Despite being highly expressed in brown adipose tissue, not required for thermogenesis. The chain is Cytochrome c oxidase subunit 7A1, mitochondrial from Mus musculus (Mouse).